Consider the following 126-residue polypeptide: Large ribosomal subunit protein bL17 (126 aa).

The protein belongs to the bacterial ribosomal protein bL17 family. Part of the 50S ribosomal subunit. Contacts protein L32.

This is Large ribosomal subunit protein bL17 from Xylella fastidiosa (strain Temecula1 / ATCC 700964).